An 802-amino-acid polypeptide reads, in one-letter code: Nuclear polyadenylated RNA-binding protein 3 (802 aa).

2 disordered regions span residues 1–174 (MSDE…RRET) and 252–293 (ALSV…RMRF). Over residues 22 to 34 (SNSNENELMNNSS) the composition is skewed to low complexity. Residues 37-73 (DGIEFDAPEEEREAEREEENEEQHELEDVNDEEEEDK) show a composition bias toward acidic residues. T86 bears the Phosphothreonine mark. Composition is skewed to acidic residues over residues 101-139 (DDDD…EEGN) and 149-158 (AAEDGEDEED). Residues 159–174 (KKDKTKDKEVELRRET) are compositionally biased toward basic and acidic residues. Over residues 260 to 276 (STISTTASASATSGARS) the composition is skewed to low complexity. The span at 277–293 (NDQRKPPLSDAQRRMRF) shows a compositional bias: basic and acidic residues. Residues 330–401 (SRLFIGNLPL…KKLILEVSSS (72 aa)) enclose the RRM domain. T451 carries the phosphothreonine modification. 2 disordered regions span residues 571–675 (IYGA…PMDQ) and 717–802 (MQGQ…KLQK). Residues 575–590 (PPLPVPNGPAVGPPPQ) show a composition bias toward pro residues. The span at 593 to 614 (YYQGYSMPPPQQQQQQPYGNYG) shows a compositional bias: low complexity. Polar residues predominate over residues 632-642 (MNQSYGRYQTS). Composition is skewed to low complexity over residues 651–661 (QIPQGYGRYQA) and 717–738 (MQGQ…MNSS). The span at 745–754 (TNYNGQNISA) shows a compositional bias: polar residues. The segment covering 757–769 (SAPPMSHQPPPPQ) has biased composition (pro residues). Residues 770-785 (QQQQQQQQQQQQQQQP) show a composition bias toward low complexity.

Its subcellular location is the nucleus. The protein resides in the nucleoplasm. Its function is as follows. May be required for packaging pre-mRNAs into ribonucleoprotein structures amenable to efficient nuclear RNA processing. Binds to poly(A)+ RNA. Appears to act in the maintenance of CLN3 mRNA levels. The protein is Nuclear polyadenylated RNA-binding protein 3 (NAB3) of Saccharomyces cerevisiae (strain ATCC 204508 / S288c) (Baker's yeast).